A 308-amino-acid polypeptide reads, in one-letter code: MSKAPRHFLDLLDMSTGELRAILDASVAMKKRRKEGLIADKPLAGKTLAMIFDKPSTRTRVSFDVGMRQLGGEAIMLTGAEMQLGRGETIADTAKVLSRFVDIIMIRILSHDALTELAAHATVPVINGLTRRSHPCQVMADVMTFEEHRGPIEGRTVAWTGDDNNVLASWAHAAERFSFNLNVATPQELAPNKPLKDWIRSSGASIRLGTDPEAAVRGADCIVTDTWVSMGDKDGEHRHNLLRPYQVNAELMRLAKSDALFMHCLPAHRGEEVTDEVIDGPQSVVFDEAENRLHAQKGILAWCLGAGG.

Carbamoyl phosphate is bound by residues 56–59 (STRT), Gln83, Arg107, and 134–137 (HPCQ). L-ornithine-binding positions include Asn165, Asp225, and 229–230 (SM). Carbamoyl phosphate is bound by residues 264 to 265 (CL) and Arg292.

This sequence belongs to the aspartate/ornithine carbamoyltransferase superfamily. OTCase family.

The protein localises to the cytoplasm. It catalyses the reaction carbamoyl phosphate + L-ornithine = L-citrulline + phosphate + H(+). Its pathway is amino-acid biosynthesis; L-arginine biosynthesis; L-arginine from L-ornithine and carbamoyl phosphate: step 1/3. In terms of biological role, reversibly catalyzes the transfer of the carbamoyl group from carbamoyl phosphate (CP) to the N(epsilon) atom of ornithine (ORN) to produce L-citrulline. The polypeptide is Ornithine carbamoyltransferase (Nitrobacter winogradskyi (strain ATCC 25391 / DSM 10237 / CIP 104748 / NCIMB 11846 / Nb-255)).